Here is a 370-residue protein sequence, read N- to C-terminus: TD and POZ domain-containing protein 4 (370 aa).

Positions 19–149 (KLCYRWTISN…DDKFTLLCKV (131 aa)) constitute an MATH domain. The 64-residue stretch at 188–251 (TDCSLLVAGH…MMGFIYTGKV (64 aa)) folds into the BTB domain.

Belongs to the Tdpoz family.

In Mus musculus (Mouse), this protein is TD and POZ domain-containing protein 4.